The following is a 419-amino-acid chain: Adenylosuccinate synthetase (419 aa).

Residues 12–18 (GDEGKGK) and 40–42 (GHT) each bind GTP. D13 (proton acceptor) is an active-site residue. Positions 13 and 40 each coordinate Mg(2+). IMP is bound by residues 13-16 (DEGK), 38-41 (NAGH), T128, R142, Q220, T235, and R299. The active-site Proton donor is H41. 295–301 (SITKRPR) is a binding site for substrate. Residues R301, 327–329 (KSD), and 407–409 (SLG) contribute to the GTP site.

This sequence belongs to the adenylosuccinate synthetase family. Homodimer. Mg(2+) is required as a cofactor.

The protein localises to the cytoplasm. It catalyses the reaction IMP + L-aspartate + GTP = N(6)-(1,2-dicarboxyethyl)-AMP + GDP + phosphate + 2 H(+). Its pathway is purine metabolism; AMP biosynthesis via de novo pathway; AMP from IMP: step 1/2. Plays an important role in the de novo pathway of purine nucleotide biosynthesis. Catalyzes the first committed step in the biosynthesis of AMP from IMP. This Azobacteroides pseudotrichonymphae genomovar. CFP2 protein is Adenylosuccinate synthetase.